Reading from the N-terminus, the 116-residue chain is Evasin P1180 (116 aa).

Residues 1-25 (MARNWSFRVIFVSAMWCALLKFATL) form the signal peptide. Intrachain disulfides connect Cys-38-Cys-58, Cys-54-Cys-95, Cys-71-Cys-100, and Cys-90-Cys-109. 3 N-linked (GlcNAc...) asparagine glycosylation sites follow: Asn-45, Asn-73, and Asn-104.

It localises to the secreted. In terms of biological role, salivary chemokine-binding protein which binds to host chemokines CCL2, CCL3, CCL4, CCL8 and CCL18. The chain is Evasin P1180 from Amblyomma triste (Neotropical tick).